Reading from the N-terminus, the 150-residue chain is MNKVVLIGRLTKDPELRFAAGSGTAVARFTLAVNRQFKKDEADFISCIAFGKTGETIAQYITKGRQLAVSGNIRTGSYEAQDGTRRYTTDVVVESFDFIDSGNGGARGNSGFGSGNDFGGSFGMPDNSFSDSSFNSNDDMTPIDDGDIPF.

The SSB domain occupies 1-100; sequence MNKVVLIGRL…VVVESFDFID (100 aa). Residues 129–139 are compositionally biased toward low complexity; sequence FSDSSFNSNDD. The segment at 129–150 is disordered; it reads FSDSSFNSNDDMTPIDDGDIPF. Acidic residues predominate over residues 141–150; that stretch reads TPIDDGDIPF.

Homotetramer.

The chain is Single-stranded DNA-binding protein (ssb) from Clostridium perfringens (strain 13 / Type A).